Reading from the N-terminus, the 695-residue chain is Testis-specific Y-encoded-like protein 2 (695 aa).

The disordered stretch occupies residues 1 to 56 (MDRPDEGPPAKTRRLSSSESPQRDPPPPPPPPPLLRLPLPPPQQRPRLQEETEAAQ). Lys-11 participates in a covalent cross-link: Glycyl lysine isopeptide (Lys-Gly) (interchain with G-Cter in SUMO2). 2 positions are modified to phosphoserine: Ser-18 and Ser-20. Positions 23–44 (RDPPPPPPPPPLLRLPLPPPQQ) are enriched in pro residues. Glycyl lysine isopeptide (Lys-Gly) (interchain with G-Cter in SUMO2) cross-links involve residues Lys-163 and Lys-165. Residues 175 to 207 (EDEDEQESMRSSRRRRRRRRRKQRKVKRESRQR) are disordered. Residues 185–202 (SSRRRRRRRRRKQRKVKR) show a composition bias toward basic residues. At Thr-340 the chain carries Phosphothreonine. 2 disordered regions span residues 471-603 (DINE…RDIE) and 632-695 (VEEE…GKTG). Over residues 481 to 491 (SPDHDEVRNET) the composition is skewed to basic and acidic residues. The segment covering 496–518 (ESADDNETTDNNESADDNNENPE) has biased composition (acidic residues). A compositionally biased stretch (basic and acidic residues) spans 519-535 (DNNKNADDNKENPDNNK). The segment covering 539 to 557 (GNNFFNGGFWGSHGNNQDS) has biased composition (low complexity). 2 stretches are compositionally biased toward acidic residues: residues 558 to 601 (SDSD…DDRD) and 632 to 677 (VEEE…DLED). Phosphoserine is present on residues Ser-670 and Ser-673.

The protein belongs to the nucleosome assembly protein (NAP) family. Interacts with histones. Interacts with CASK. Part of a complex containing CASK, TBR1 and TSPYL2. Post-translationally, phosphorylation at Ser-20 and/or Thr-340 impairs function on cell proliferation. As to expression, ubiquitously expressed, with highest levels in testis, adrenal gland, cerebral cortex, ovary, skeletal muscle and spleen. Present in testis, adrenal gland, cerebral cortex and ovary (at protein level).

The protein localises to the nucleus. It is found in the cytoplasm. Functionally, part of the CASK/TBR1/TSPYL2 transcriptional complex which modulates gene expression in response to neuronal synaptic activity, probably by facilitating nucleosome assembly. May inhibit cell proliferation by inducing p53-dependent CDKN1A expression. The sequence is that of Testis-specific Y-encoded-like protein 2 (TSPYL2) from Macaca fascicularis (Crab-eating macaque).